Consider the following 286-residue polypeptide: E3 ubiquitin-protein ligase SINA-like 7 (286 aa).

The RING-type zinc finger occupies 51 to 87 (CPICYEAFTIPIFQCDNGHLACSSCCPKLNNKCPACT). An SBD region spans residues 101 to 285 (VLESILIPCP…MRISVKKLNK (185 aa)). The SIAH-type zinc-finger motif lies at 104-162 (SILIPCPNAKLGCKKNVSYGKELTHEKECMFSHCACPALDCNYTSSYKDLYTHYRITHM). The Zn(2+) site is built by cysteine 109, cysteine 116, histidine 128, cysteine 132, cysteine 139, cysteine 144, histidine 156, and histidine 161.

Belongs to the SINA (Seven in absentia) family.

The enzyme catalyses S-ubiquitinyl-[E2 ubiquitin-conjugating enzyme]-L-cysteine + [acceptor protein]-L-lysine = [E2 ubiquitin-conjugating enzyme]-L-cysteine + N(6)-ubiquitinyl-[acceptor protein]-L-lysine.. It functions in the pathway protein modification; protein ubiquitination. Functionally, E3 ubiquitin-protein ligase that mediates ubiquitination and subsequent proteasomal degradation of target proteins. E3 ubiquitin ligases accept ubiquitin from an E2 ubiquitin-conjugating enzyme in the form of a thioester and then directly transfers the ubiquitin to targeted substrates. It probably triggers the ubiquitin-mediated degradation of different substrates. This is E3 ubiquitin-protein ligase SINA-like 7 from Arabidopsis thaliana (Mouse-ear cress).